The following is a 1169-amino-acid chain: MAEEEVAKLEKHLMLLRQEYVKLQKKLAETEKRCALLAAQANKESSSESFISRLLAIVADLYEQEQYSDLKIKVGDRHISAHKFVLAARSDSWSLANLSSTKELDLSDANPEVTMTMLRWIYTDELEFREDDVFLTELMKLANRFQLQLLRERCEKGVMSLVNVRNCIRFYQTAEELNASTLMNYCAEIIASHWDDLRKEDFSSMSAQLLYKMIKSKTEYPLHKAIKVEREDVVFLYLIEMDSQLPGKLNEADHNGDLALDLALSRRLESIATTLVSHKADVDMVDKSGWSLLHKGIQRGDLFAATFLIKNGAFVNAATLGAQETPLHLVALYSSKKHSADVMSEMAQIAEALLQAGANPNMQDSKGRTPLHVSIMAGNEYVFSQLLQCKQLDLELKDHEGSTALWLAVQHITVSSDQSVNPFEDVPVVNGTSFDENSFAARLIQRGSHTDAPDTATGNCLLQRAAGAGNEAAALFLATNGAHVNHRNKWGETPLHTACRHGLANLTAELLQQGANPNLQTEEALPLPKEAASLTSLADSVHLQTPLHMAIAYNHPDVVSVILEQKANALHATNNLQIIPDFSLKDSRDQTVLGLALWTGMHTIAAQLLGSGAAINDTMSDGQTLLHMAIQRQDSKSALFLLEHQADINVRTQDGETALQLAIRNQLPLVVDAICTRGADMSVPDEKGNPPLWLALANNLEDIASTLVRHGCDATCWGPGPGGCLQTLLHRAIDENNEPTACFLIRSGCDVNSPRQPGANGEGEEEARDGQTPLHLAASWGLEETVQCLLEFGANVNAQDAEGRTPIHVAISSQHGVIIQLLVSHPDIHLNVRDRQGLTPFACAMTFKNNKSAEAILKRESGAAEQVDNKGRNFLHVAVQNSDIESVLFLISVHANVNSRVQDASKLTPLHLAVQAGSEIIVRNLLLAGAKVNELTKHRQTALHLAAQQDLPTICSVLLENGVDFAAVDENGNNALHLAVMHGRLNNIRVLLTECTVDAEAFNLRGQSPLHILGQYGKENAAAIFDLFLECMPGYPLDKPDADGSTVLLLAYMKGNANLCRAIVRSGARLGVNNNQGVNIFNYQVATKQLLFRLLDMLSKEPPWCDGSYCYECTARFGVTTRKHHCRHCGRLLCHKCSTKEIPIIKFDLNKPVRVCNICFDVLTLGGVS.

Ala-2 is subject to N-acetylalanine. Residues 68-130 form the BTB domain; it reads SDLKIKVGDR…IYTDELEFRE (63 aa). 5 ANK repeats span residues 217 to 247, 255 to 284, 288 to 317, 322 to 362, and 366 to 396; these read KTEY…QLPG, NGDL…DVDM, SGWS…FVNA, AQET…NPNM, and KGRT…DLEL. Ser-270 is modified (phosphoserine). The NPF signature appears at 421–423; the sequence is NPF. ANK repeat units follow at residues 490 to 519, 542 to 572, 588 to 617, 621 to 650, 654 to 683, 687 to 716, 724 to 753, 769 to 798, 802 to 832, 836 to 865, 870 to 899, 905 to 934, 938 to 967, 971 to 1001, 1005 to 1037, and 1043 to 1072; these read WGET…NPNL, HLQT…ALHA, RDQT…AIND, DGQT…DINV, DGET…DMSV, KGNP…DATC, CLQT…DVNS, DGQT…NVNA, EGRT…HLNV, QGLT…GAAE, KGRN…NVNS, SKLT…KVNE, HRQT…DFAA, NGNN…DAEA, RGQS…GYPL, and DGST…RLGV. Positions 650 to 759 are interaction with RHOD and RAB5A; it reads VRTQDGETAL…DVNSPRQPGA (110 aa). An FYVE-type zinc finger spans residues 1104–1164; it reads WCDGSYCYEC…VCNICFDVLT (61 aa). Positions 1110, 1113, 1126, 1129, 1134, 1137, 1156, and 1159 each coordinate Zn(2+).

In terms of assembly, interacts with RAB5A (in GTP-bound form). Interacts with RHOD (independent of GTP-loaded status). Interacts with EHD1. Interacts with VPS26A; the interaction is independent of EHD1 and is indicative for an association with the cargo recognition subcomplex of the retromer complex. High expression in whole adult brain and intermediate expression in all other tissues and specific brain regions examined, including fetal brain.

It localises to the cytoplasm. It is found in the endosome membrane. The protein resides in the early endosome. In terms of biological role, proposed effector of Rab5. Binds to phosphatidylinositol 3-phosphate (PI(3)P). Involved in homotypic early endosome fusion and to a lesser extent in heterotypic fusion of chlathrin-coated vesicles with early endosomes. Involved in macropinocytosis; the function is dependent on Rab5-GTP. Required for correct endosomal localization. Involved in the internalization and trafficking of activated tyrosine kinase receptors such as PDGFRB. Regulates the subcellular localization of the retromer complex in a EHD1-dependent manner. Involved in endosome-to-Golgi transport and biosynthetic transport to late endosomes and lysosomes indicative for a regulation of retromer complex-mediated retrograde transport. The protein is Rabankyrin-5 (ANKFY1) of Homo sapiens (Human).